We begin with the raw amino-acid sequence, 248 residues long: Glutamine-binding periplasmic protein (248 aa).

Residues 1–22 form the signal peptide; that stretch reads MKSVLKVSLAALTLAFAVSSHA.

It belongs to the bacterial solute-binding protein 3 family.

The protein resides in the periplasm. Involved in a glutamine-transport system GlnHPQ. The protein is Glutamine-binding periplasmic protein (glnH) of Escherichia coli O157:H7.